The primary structure comprises 788 residues: Integrin beta-6 (788 aa).

The signal sequence occupies residues 1 to 21 (MGIELLCLFFLFLGRNDHVQG). Residues 22 to 71 (GCALGGAETCEDCLLIGPQCAWCAQENFTHPSGVGERCDTPANLLAKGCQ) form the PSI domain. The Extracellular portion of the chain corresponds to 22–709 (GCALGGAETC…KDCPKPPNIP (688 aa)). 19 cysteine pairs are disulfide-bonded: cysteine 23–cysteine 41, cysteine 31–cysteine 454, cysteine 34–cysteine 59, cysteine 44–cysteine 70, cysteine 197–cysteine 204, cysteine 252–cysteine 293, cysteine 394–cysteine 406, cysteine 426–cysteine 452, cysteine 456–cysteine 476, cysteine 467–cysteine 479, cysteine 481–cysteine 490, cysteine 492–cysteine 519, cysteine 502–cysteine 517, cysteine 511–cysteine 522, cysteine 524–cysteine 537, cysteine 539–cysteine 560, cysteine 544–cysteine 558, cysteine 552–cysteine 563, and cysteine 565–cysteine 574. Residues asparagine 48 and asparagine 97 are each glycosylated (N-linked (GlcNAc...) asparagine). The region spanning 131–371 (YPVDLYYLMD…QLIISAYEEL (241 aa)) is the VWFA domain. Residues aspartate 140, serine 142, and serine 144 each contribute to the Mg(2+) site. Positions 144, 147, 148, and 179 each coordinate Ca(2+). Residues asparagine 235, aspartate 237, proline 239, and glutamate 240 each contribute to the Ca(2+) site. Glutamate 240 is a Mg(2+) binding site. Asparagine 260 carries an N-linked (GlcNAc...) asparagine glycan. Ca(2+)-binding residues include aspartate 271 and lysine 355. Residues asparagine 387 and asparagine 396 are each glycosylated (N-linked (GlcNAc...) asparagine). I-EGF domains are found at residues 456–491 (CQKEVEVNSSKCHHGNGSFQCGVCACHPGHMGPRCE), 492–538 (CGED…PYCQ), 539–575 (CDNFSCVRHKGLLCGGNGDCDCGECVCRSGWTGEYCN), and 576–615 (CTTSTDSCVSEDGVLCSGRGDCVCGKCVCTNPGASGPTCE). 2 N-linked (GlcNAc...) asparagine glycosylation sites follow: asparagine 463 and asparagine 471. The N-linked (GlcNAc...) asparagine glycan is linked to asparagine 541. An N-linked (GlcNAc...) asparagine glycan is attached at asparagine 575. 9 disulfide bridges follow: cysteine 576-cysteine 599, cysteine 583-cysteine 597, cysteine 591-cysteine 602, cysteine 604-cysteine 614, cysteine 617-cysteine 620, cysteine 624-cysteine 670, cysteine 630-cysteine 649, cysteine 633-cysteine 645, and cysteine 678-cysteine 702. The chain crosses the membrane as a helical span at residues 710–730 (MIMLGVSLAILLIGVVLLCIW). The interval 731 to 758 (KLLVSFHDRKEVAKFEAERSKAKWQTGT) is interaction with HAX1. Residues 731–788 (KLLVSFHDRKEVAKFEAERSKAKWQTGTNPLYRGSTSTFKNVTYKHREKQKVDLSTDC) are Cytoplasmic-facing.

Belongs to the integrin beta chain family. In terms of assembly, heterodimer of an alpha and a beta subunit. Interacts with FLNB. Interacts with HAX1. ITGAV:ITGB6 interacts with FBN1. ITGAV:ITGB6 interacts with TGFB1. As to quaternary structure, (Microbial infection) Integrin ITGAV:ITGB6 interacts with coxsackievirus A9, coxsackievirus B1 capsid proteins. (Microbial infection) Integrin ITGAV:ITGB6 interacts with herpes simplex virus-1/HHV-1 gH:gL proteins.

The protein resides in the cell membrane. It is found in the cell junction. Its subcellular location is the focal adhesion. In terms of biological role, integrin alpha-V:beta-6 (ITGAV:ITGB6) is a receptor for fibronectin and cytotactin. It recognizes the sequence R-G-D in its ligands. Internalization of integrin alpha-V/beta-6 via clathrin-mediated endocytosis promotes carcinoma cell invasion. ITGAV:ITGB6 acts as a receptor for fibrillin-1 (FBN1) and mediates R-G-D-dependent cell adhesion to FBN1. Integrin alpha-V:beta-6 (ITGAV:ITGB6) mediates R-G-D-dependent release of transforming growth factor beta-1 (TGF-beta-1) from regulatory Latency-associated peptide (LAP), thereby playing a key role in TGF-beta-1 activation. Functionally, (Microbial infection) Integrin ITGAV:ITGB6 acts as a receptor for Coxsackievirus A9 and Coxsackievirus B1. (Microbial infection) Integrin ITGAV:ITGB6 acts as a receptor for Herpes simplex virus-1/HHV-1. This chain is Integrin beta-6 (ITGB6), found in Homo sapiens (Human).